The chain runs to 372 residues: Chemerin-like receptor 1 (372 aa).

Residues 1–39 (MEYEGYNDSSIYGEEYSDGSDYIVDLEEAGPLEAKVAEV) are Extracellular-facing. Asparagine 7 carries N-linked (GlcNAc...) asparagine glycosylation. A helical membrane pass occupies residues 40–62 (FLVVIYSLVCFLGILGNGLVIVI). Over 63–73 (ATFKMKKTVNT) the chain is Cytoplasmic. A helical membrane pass occupies residues 74-95 (VWFVNLAVADFLFNIFLPIHIT). The Extracellular segment spans residues 96–112 (YAAMDYHWVFGKAMCKI). A disulfide bridge connects residues cysteine 110 and cysteine 188. Residues 113 to 133 (SSFLLSHNMYTSVFLLTVISF) traverse the membrane as a helical segment. Topologically, residues 134-152 (DRCISVLLPVWSQNHRSVR) are cytoplasmic. Residues 153–174 (LAYMTCVVVWVLAFFLSSPSLV) traverse the membrane as a helical segment. Topologically, residues 175 to 223 (FRDTVSTSHGKITCFNNFSLAAPEPFSHSTHPRTDPVGYSRHVAVTVTR) are extracellular. A glycan (N-linked (GlcNAc...) asparagine) is linked at asparagine 191. Residues 224–244 (FLCGFLIPVFIITACYLTIVF) traverse the membrane as a helical segment. Over 245–260 (KLQRNRLAKTKKPFKI) the chain is Cytoplasmic. The helical transmembrane segment at 261–281 (IITIIITFFLCWCPYHTLYLL) threads the bilayer. Topologically, residues 282–299 (ELHHTAVPASVFSLGLPL) are extracellular. A helical transmembrane segment spans residues 300-319 (ATAVAIANSCMNPILYVFMG). The Cytoplasmic portion of the chain corresponds to 320 to 372 (HDFKKFKVALFSRLVNALSEDTGPSSYPSHRSFTKMSSLIEKASVNEKETSTL). Position 338 is a phosphoserine (serine 338). Threonine 341 carries the phosphothreonine modification. A phosphoserine mark is found at serine 348, serine 351, and serine 357. The residue at position 371 (threonine 371) is a Phosphothreonine.

This sequence belongs to the chemokine-like receptor (CMKLR) family. In terms of tissue distribution, high expression in heart and lung, low in small intestines, colon, kidney, liver, uterus and brain.

The protein localises to the cell membrane. Receptor for the chemoattractant adipokine chemerin/RARRES2 and for the omega-3 fatty acid derived molecule resolvin E1. Interaction with RARRES2 initiates activation of G proteins G(i)/G(o) and beta-arrestin pathways inducing cellular responses via second messenger pathways such as intracellular calcium mobilization, phosphorylation of MAP kinases MAPK1/MAPK3 (ERK1/2), TYRO3, MAPK14/P38MAPK and PI3K leading to multifunctional effects, like, reduction of immune responses, enhancing of adipogenesis and angionesis. Resolvin E1 down-regulates cytokine production in macrophages by reducing the activation of MAPK1/3 (ERK1/2) and NF-kappa-B. Positively regulates adipogenesis and adipocyte metabolism. The protein is Chemerin-like receptor 1 (Cmklr1) of Rattus norvegicus (Rat).